The primary structure comprises 216 residues: Peroxiredoxin (216 aa).

The 157-residue stretch at 2-158 folds into the Thioredoxin domain; it reads VVIGEKFPEV…ILRLVKALKI (157 aa). The active-site Cysteine sulfenic acid (-SOH) intermediate is the Cys-46. Residue Arg-121 participates in substrate binding. The cysteines at positions 205 and 211 are disulfide-linked.

Belongs to the peroxiredoxin family. Prx6 subfamily. As to quaternary structure, homodecamer. Pentamer of dimers that assemble into a ring structure.

The protein resides in the cytoplasm. It catalyses the reaction a hydroperoxide + [thioredoxin]-dithiol = an alcohol + [thioredoxin]-disulfide + H2O. Thiol-specific peroxidase that catalyzes the reduction of hydrogen peroxide and organic hydroperoxides to water and alcohols, respectively. Plays a role in cell protection against oxidative stress by detoxifying peroxides. The protein is Peroxiredoxin (ahpC) of Pyrococcus horikoshii (strain ATCC 700860 / DSM 12428 / JCM 9974 / NBRC 100139 / OT-3).